We begin with the raw amino-acid sequence, 477 residues long: Glycogen synthase (477 aa).

Position 15 (K15) interacts with ADP-alpha-D-glucose.

The protein belongs to the glycosyltransferase 1 family. Bacterial/plant glycogen synthase subfamily.

The enzyme catalyses [(1-&gt;4)-alpha-D-glucosyl](n) + ADP-alpha-D-glucose = [(1-&gt;4)-alpha-D-glucosyl](n+1) + ADP + H(+). The protein operates within glycan biosynthesis; glycogen biosynthesis. Synthesizes alpha-1,4-glucan chains using ADP-glucose. The protein is Glycogen synthase of Klebsiella pneumoniae (strain 342).